Reading from the N-terminus, the 593-residue chain is ABC transporter F family member 2 (593 aa).

Residues 1–10 (MAKKGGKNNK) show a composition bias toward basic residues. Residues 1–25 (MAKKGGKNNKSKKEVTPPTSDVEDE) are disordered. ABC transporter domains lie at 53 to 294 (VKIE…VNQM) and 364 to 583 (MHFD…RDLT). ATP contacts are provided by residues 85–92 (GQNGCGKS) and 399–406 (GPNGAGKS).

Belongs to the ABC transporter superfamily. ABCF family. EF3 subfamily.

The polypeptide is ABC transporter F family member 2 (abcF2) (Dictyostelium discoideum (Social amoeba)).